A 474-amino-acid chain; its full sequence is Trigger factor (474 aa).

The PPIase FKBP-type domain occupies G165 to L250. Residues V451 to K467 are compositionally biased toward basic and acidic residues. Residues V451–V474 form a disordered region.

The protein belongs to the FKBP-type PPIase family. Tig subfamily.

Its subcellular location is the cytoplasm. The enzyme catalyses [protein]-peptidylproline (omega=180) = [protein]-peptidylproline (omega=0). Functionally, involved in protein export. Acts as a chaperone by maintaining the newly synthesized protein in an open conformation. Functions as a peptidyl-prolyl cis-trans isomerase. This is Trigger factor from Bartonella bacilliformis (strain ATCC 35685 / KC583 / Herrer 020/F12,63).